The sequence spans 82 residues: Small ribosomal subunit protein uS17 (82 aa).

Belongs to the universal ribosomal protein uS17 family. In terms of assembly, part of the 30S ribosomal subunit.

One of the primary rRNA binding proteins, it binds specifically to the 5'-end of 16S ribosomal RNA. The chain is Small ribosomal subunit protein uS17 from Bradyrhizobium sp. (strain BTAi1 / ATCC BAA-1182).